The sequence spans 71 residues: Large ribosomal subunit protein uL29 (71 aa).

It belongs to the universal ribosomal protein uL29 family.

The protein is Large ribosomal subunit protein uL29 of Methanocella arvoryzae (strain DSM 22066 / NBRC 105507 / MRE50).